Reading from the N-terminus, the 143-residue chain is Large ribosomal subunit protein uL11 (143 aa).

This sequence belongs to the universal ribosomal protein uL11 family. As to quaternary structure, part of the ribosomal stalk of the 50S ribosomal subunit. Interacts with L10 and the large rRNA to form the base of the stalk. L10 forms an elongated spine to which L12 dimers bind in a sequential fashion forming a multimeric L10(L12)X complex. In terms of processing, one or more lysine residues are methylated.

Functionally, forms part of the ribosomal stalk which helps the ribosome interact with GTP-bound translation factors. The protein is Large ribosomal subunit protein uL11 of Janthinobacterium sp. (strain Marseille) (Minibacterium massiliensis).